A 256-amino-acid chain; its full sequence is MGRGRVQLKRIENKINRQVTFSKRRAGLLKKAQEISVLCDAEVSLIVFSHKGKLFEYTSESCMEKVLERYERYSYAERQLIAPDSHINAQPNWSMEYSRLKAKIELLERNQRHYLGEDLEPMSLKDLQNLEQQLETALKHIRSRKNQLMYESLNHLQRKENEIQEENSMLTKQIKERENILRTQQTQCEQLNRNHDVPPPQPQPFQHPHPYMISHQTSPFLNLGGMYQGEDQTAMRRNNLDLTLEPIYNYLGCYAA.

Residues 1-61 (MGRGRVQLKR…GKLFEYTSES (61 aa)) form the MADS-box domain. A K-box domain is found at 90–180 (QPNWSMEYSR…TKQIKERENI (91 aa)).

Homodimer capable of binding to CArG-box sequences.

It is found in the nucleus. Its function is as follows. Probable transcription factor that promotes early floral meristem identity in synergy with APETALA1, FRUITFULL and LEAFY. Is required subsequently for the transition of an inflorescence meristem into a floral meristem. Seems to be partially redundant to the function of APETALA1. The protein is Transcription factor CAULIFLOWER (CAL) of Arabidopsis lyrata subsp. lyrata (Lyre-leaved rock-cress).